Here is a 188-residue protein sequence, read N- to C-terminus: Elongation factor P (188 aa).

The protein belongs to the elongation factor P family.

It is found in the cytoplasm. It functions in the pathway protein biosynthesis; polypeptide chain elongation. Functionally, involved in peptide bond synthesis. Stimulates efficient translation and peptide-bond synthesis on native or reconstituted 70S ribosomes in vitro. Probably functions indirectly by altering the affinity of the ribosome for aminoacyl-tRNA, thus increasing their reactivity as acceptors for peptidyl transferase. The protein is Elongation factor P of Bifidobacterium longum (strain DJO10A).